Consider the following 139-residue polypeptide: Large ribosomal subunit protein bL9m (139 aa).

The disordered stretch occupies residues 83–121 (DHQQLSKRHETEVQKNMELRKESVFGHKKEEKPKEEKKG).

This sequence belongs to the bacterial ribosomal protein bL9 family. As to quaternary structure, component of the mitochondrial large ribosomal subunit (mt-LSU). Mature yeast 74S mitochondrial ribosomes consist of a small (37S) and a large (54S) subunit. The 37S small subunit contains a 15S ribosomal RNA (15S mt-rRNA) and 34 different proteins. The 54S large subunit contains a 21S rRNA (21S mt-rRNA) and 46 different proteins.

The protein resides in the mitochondrion. Functionally, component of the mitochondrial ribosome (mitoribosome), a dedicated translation machinery responsible for the synthesis of mitochondrial genome-encoded proteins, including at least some of the essential transmembrane subunits of the mitochondrial respiratory chain. The mitoribosomes are attached to the mitochondrial inner membrane and translation products are cotranslationally integrated into the membrane. This Saccharomyces cerevisiae (strain ATCC 204508 / S288c) (Baker's yeast) protein is Large ribosomal subunit protein bL9m (MRPL50).